Reading from the N-terminus, the 306-residue chain is Aspartate carbamoyltransferase catalytic subunit (306 aa).

The carbamoyl phosphate site is built by Arg49 and Thr50. Lys77 contacts L-aspartate. Carbamoyl phosphate-binding residues include Arg99, His127, and Gln130. Positions 160 and 211 each coordinate L-aspartate. Residues Ala250 and Pro251 each contribute to the carbamoyl phosphate site.

It belongs to the aspartate/ornithine carbamoyltransferase superfamily. ATCase family. Heterododecamer (2C3:3R2) of six catalytic PyrB chains organized as two trimers (C3), and six regulatory PyrI chains organized as three dimers (R2).

It carries out the reaction carbamoyl phosphate + L-aspartate = N-carbamoyl-L-aspartate + phosphate + H(+). It functions in the pathway pyrimidine metabolism; UMP biosynthesis via de novo pathway; (S)-dihydroorotate from bicarbonate: step 2/3. Its function is as follows. Catalyzes the condensation of carbamoyl phosphate and aspartate to form carbamoyl aspartate and inorganic phosphate, the committed step in the de novo pyrimidine nucleotide biosynthesis pathway. This is Aspartate carbamoyltransferase catalytic subunit from Bacillus licheniformis (strain ATCC 14580 / DSM 13 / JCM 2505 / CCUG 7422 / NBRC 12200 / NCIMB 9375 / NCTC 10341 / NRRL NRS-1264 / Gibson 46).